A 256-amino-acid chain; its full sequence is 6-phosphogluconolactonase (256 aa).

This sequence belongs to the glucosamine/galactosamine-6-phosphate isomerase family. 6-phosphogluconolactonase subfamily.

It catalyses the reaction 6-phospho-D-glucono-1,5-lactone + H2O = 6-phospho-D-gluconate + H(+). It participates in carbohydrate degradation; pentose phosphate pathway; D-ribulose 5-phosphate from D-glucose 6-phosphate (oxidative stage): step 2/3. Functionally, hydrolysis of 6-phosphogluconolactone to 6-phosphogluconate. This is 6-phosphogluconolactonase (pgl) from Chlamydia muridarum (strain MoPn / Nigg).